A 287-amino-acid polypeptide reads, in one-letter code: Ribosomal RNA small subunit methyltransferase A (287 aa).

S-adenosyl-L-methionine is bound by residues Asn-18, Leu-20, Gly-45, Glu-66, Asp-91, and Asn-118.

The protein belongs to the class I-like SAM-binding methyltransferase superfamily. rRNA adenine N(6)-methyltransferase family. RsmA subfamily.

Its subcellular location is the cytoplasm. It catalyses the reaction adenosine(1518)/adenosine(1519) in 16S rRNA + 4 S-adenosyl-L-methionine = N(6)-dimethyladenosine(1518)/N(6)-dimethyladenosine(1519) in 16S rRNA + 4 S-adenosyl-L-homocysteine + 4 H(+). Functionally, specifically dimethylates two adjacent adenosines (A1518 and A1519) in the loop of a conserved hairpin near the 3'-end of 16S rRNA in the 30S particle. May play a critical role in biogenesis of 30S subunits. This is Ribosomal RNA small subunit methyltransferase A from Haemophilus influenzae (strain ATCC 51907 / DSM 11121 / KW20 / Rd).